Consider the following 817-residue polypeptide: Myosin-A (817 aa).

Ser19 carries the post-translational modification Phosphoserine. Residues 97–771 (MSFGDIGLLN…GAKMLSKIQR (675 aa)) enclose the Myosin motor domain. 191–198 (GESGAGKT) contacts ATP. The segment at 661 to 671 (PHFIRCIKPNE) is actin-binding. A tail region spans residues 773-817 (KLVEWENCVSVIEAAIMKYKHKQNVENNVSSLMRVQAHIRKRMVA).

Belongs to the TRAFAC class myosin-kinesin ATPase superfamily. Myosin family. Interacts with ACT1.

It is found in the cell membrane. Its function is as follows. Myosins are actin-based motor molecules with ATPase activity. Unconventional myosins serve in intracellular movements. Their highly divergent tails are presumed to bind to membranous compartments, which would be moved relative to actin filaments. The polypeptide is Myosin-A (Plasmodium yoelii yoelii).